The sequence spans 219 residues: Protein-L-isoaspartate O-methyltransferase (219 aa).

The active site involves Ser67.

The protein belongs to the methyltransferase superfamily. L-isoaspartyl/D-aspartyl protein methyltransferase family.

Its subcellular location is the cytoplasm. It catalyses the reaction [protein]-L-isoaspartate + S-adenosyl-L-methionine = [protein]-L-isoaspartate alpha-methyl ester + S-adenosyl-L-homocysteine. Catalyzes the methyl esterification of L-isoaspartyl residues in peptides and proteins that result from spontaneous decomposition of normal L-aspartyl and L-asparaginyl residues. It plays a role in the repair and/or degradation of damaged proteins. This chain is Protein-L-isoaspartate O-methyltransferase, found in Cereibacter sphaeroides (strain ATCC 17029 / ATH 2.4.9) (Rhodobacter sphaeroides).